A 434-amino-acid chain; its full sequence is Gamma-glutamyl phosphate reductase (434 aa).

It belongs to the gamma-glutamyl phosphate reductase family.

It localises to the cytoplasm. The enzyme catalyses L-glutamate 5-semialdehyde + phosphate + NADP(+) = L-glutamyl 5-phosphate + NADPH + H(+). It participates in amino-acid biosynthesis; L-proline biosynthesis; L-glutamate 5-semialdehyde from L-glutamate: step 2/2. Its function is as follows. Catalyzes the NADPH-dependent reduction of L-glutamate 5-phosphate into L-glutamate 5-semialdehyde and phosphate. The product spontaneously undergoes cyclization to form 1-pyrroline-5-carboxylate. This chain is Gamma-glutamyl phosphate reductase, found in Rhodopirellula baltica (strain DSM 10527 / NCIMB 13988 / SH1).